Here is a 77-residue protein sequence, read N- to C-terminus: Acyl carrier protein (77 aa).

Positions 2–77 constitute a Carrier domain; the sequence is AEVLEKVTKI…DAVKYIEANA (76 aa). O-(pantetheine 4'-phosphoryl)serine is present on S37.

This sequence belongs to the acyl carrier protein (ACP) family. In terms of processing, 4'-phosphopantetheine is transferred from CoA to a specific serine of apo-ACP by AcpS. This modification is essential for activity because fatty acids are bound in thioester linkage to the sulfhydryl of the prosthetic group.

It localises to the cytoplasm. It participates in lipid metabolism; fatty acid biosynthesis. Its function is as follows. Carrier of the growing fatty acid chain in fatty acid biosynthesis. In Listeria innocua serovar 6a (strain ATCC BAA-680 / CLIP 11262), this protein is Acyl carrier protein.